The primary structure comprises 212 residues: Imidazole glycerol phosphate synthase subunit HisH (212 aa).

Residues 3 to 212 (DVAIIDYGMG…MLANFISWAP (210 aa)) form the Glutamine amidotransferase type-1 domain. Cys-82 acts as the Nucleophile in catalysis. Residues His-192 and Glu-194 contribute to the active site.

Heterodimer of HisH and HisF.

Its subcellular location is the cytoplasm. The enzyme catalyses 5-[(5-phospho-1-deoxy-D-ribulos-1-ylimino)methylamino]-1-(5-phospho-beta-D-ribosyl)imidazole-4-carboxamide + L-glutamine = D-erythro-1-(imidazol-4-yl)glycerol 3-phosphate + 5-amino-1-(5-phospho-beta-D-ribosyl)imidazole-4-carboxamide + L-glutamate + H(+). The catalysed reaction is L-glutamine + H2O = L-glutamate + NH4(+). The protein operates within amino-acid biosynthesis; L-histidine biosynthesis; L-histidine from 5-phospho-alpha-D-ribose 1-diphosphate: step 5/9. Functionally, IGPS catalyzes the conversion of PRFAR and glutamine to IGP, AICAR and glutamate. The HisH subunit catalyzes the hydrolysis of glutamine to glutamate and ammonia as part of the synthesis of IGP and AICAR. The resulting ammonia molecule is channeled to the active site of HisF. The sequence is that of Imidazole glycerol phosphate synthase subunit HisH from Aromatoleum aromaticum (strain DSM 19018 / LMG 30748 / EbN1) (Azoarcus sp. (strain EbN1)).